Reading from the N-terminus, the 132-residue chain is Protamine (132 aa).

Disordered regions lie at residues 17–46 and 96–115; these read GGKK…RGGR and SMLK…RRRR. Composition is skewed to basic residues over residues 18–46 and 98–115; these read GKKR…RGGR and LKKR…RRRR.

This sequence belongs to the UPF0771 family. In terms of tissue distribution, testis.

It is found in the nucleus. Its subcellular location is the chromosome. Functionally, protamines substitute for histones in the chromatin of sperm during the haploid phase of spermatogenesis. They compact sperm DNA into a highly condensed, stable and inactive complex. The chain is Protamine from Anthonomus grandis (Mexican cotton boll weevil).